Reading from the N-terminus, the 282-residue chain is uncharacterized protein (282 aa).

One can recognise an HTH rpiR-type domain in the interval 2 to 78; that stretch reads TDVLAVIREM…IKIAVSLAKQ (77 aa). Positions 38 to 57 form a DNA-binding region, H-T-H motif; it reads VNELANACDTSEASIIRFCR. The 141-residue stretch at 122 to 262 folds into the SIS domain; it reads AAEALANANK…FILVAQKKYN (141 aa).

This is an uncharacterized protein from Caldanaerobacter subterraneus subsp. tengcongensis (strain DSM 15242 / JCM 11007 / NBRC 100824 / MB4) (Thermoanaerobacter tengcongensis).